A 492-amino-acid polypeptide reads, in one-letter code: Ketol-acid reductoisomerase (NADP(+)) (492 aa).

The 194-residue stretch at 15 to 208 folds into the KARI N-terminal Rossmann domain; that stretch reads AQLGKCRFMA…GGHRAGVLES (194 aa). Residues 45–48, Arg68, Arg76, Ser78, and 108–110 contribute to the NADP(+) site; these read CGAQ and DKQ. Residue His132 is part of the active site. Gly158 contacts NADP(+). KARI C-terminal knotted domains follow at residues 209 to 344 and 345 to 485; these read SFVA…TAAQ and FEGK…MTDM. Asp217, Glu221, Glu389, and Glu393 together coordinate Mg(2+). A substrate-binding site is contributed by Ser414.

Belongs to the ketol-acid reductoisomerase family. Requires Mg(2+) as cofactor.

The enzyme catalyses (2R)-2,3-dihydroxy-3-methylbutanoate + NADP(+) = (2S)-2-acetolactate + NADPH + H(+). It carries out the reaction (2R,3R)-2,3-dihydroxy-3-methylpentanoate + NADP(+) = (S)-2-ethyl-2-hydroxy-3-oxobutanoate + NADPH + H(+). It participates in amino-acid biosynthesis; L-isoleucine biosynthesis; L-isoleucine from 2-oxobutanoate: step 2/4. Its pathway is amino-acid biosynthesis; L-valine biosynthesis; L-valine from pyruvate: step 2/4. Functionally, involved in the biosynthesis of branched-chain amino acids (BCAA). Catalyzes an alkyl-migration followed by a ketol-acid reduction of (S)-2-acetolactate (S2AL) to yield (R)-2,3-dihydroxy-isovalerate. In the isomerase reaction, S2AL is rearranged via a Mg-dependent methyl migration to produce 3-hydroxy-3-methyl-2-ketobutyrate (HMKB). In the reductase reaction, this 2-ketoacid undergoes a metal-dependent reduction by NADPH to yield (R)-2,3-dihydroxy-isovalerate. The polypeptide is Ketol-acid reductoisomerase (NADP(+)) (Erwinia tasmaniensis (strain DSM 17950 / CFBP 7177 / CIP 109463 / NCPPB 4357 / Et1/99)).